The sequence spans 397 residues: Cathepsin E (397 aa).

The signal sequence occupies residues 1 to 20; sequence MKPLLVLLLLLLLDLAQAQG. Positions 21-59 are cleaved as a propeptide — activation peptide; that stretch reads ALHRVPLRRHQSLRKKLRAQGQLSEFWRSHNLDMTRLSE. The Peptidase A1 domain occupies 79-393; it reads YFGTISIGTP…DRGNNQVGLA (315 aa). Residue asparagine 91 is glycosylated (N-linked (GlcNAc...) asparagine). The active site involves aspartate 97. 2 disulfides stabilise this stretch: cysteine 110–cysteine 115 and cysteine 273–cysteine 277. Aspartate 282 is an active-site residue. A glycan (N-linked (GlcNAc...) asparagine) is linked at asparagine 323.

The protein belongs to the peptidase A1 family. In terms of assembly, homodimer; disulfide-linked. Post-translationally, glycosylated. The nature of the carbohydrate chain varies between cell types. In fibroblasts, the proenzyme contains a high mannose-type oligosaccharide, while the mature enzyme contains a complex-type oligosaccharide. As to expression, expressed abundantly in the stomach, club cells and alveolar macrophages of the lung, brain microglia, spleen and activated B-lymphocytes. Not expressed in resting B-lymphocytes.

It localises to the endosome. The enzyme catalyses Similar to cathepsin D, but slightly broader specificity.. In terms of biological role, may have a role in immune function. Probably involved in the processing of antigenic peptides during MHC class II-mediated antigen presentation. May play a role in activation-induced lymphocyte depletion in the thymus, and in neuronal degeneration and glial cell activation in the brain. The protein is Cathepsin E (Ctse) of Mus musculus (Mouse).